The primary structure comprises 145 residues: Flagellar assembly factor FliW (145 aa).

Belongs to the FliW family. Interacts with translational regulator CsrA and flagellin(s).

The protein resides in the cytoplasm. In terms of biological role, acts as an anti-CsrA protein, binds CsrA and prevents it from repressing translation of its target genes, one of which is flagellin. Binds to flagellin and participates in the assembly of the flagellum. The chain is Flagellar assembly factor FliW from Clostridium tetani (strain Massachusetts / E88).